A 307-amino-acid chain; its full sequence is Ribosomal protein L11 methyltransferase (307 aa).

Residues Thr-156, Gly-177, Asp-199, and Asn-243 each contribute to the S-adenosyl-L-methionine site.

This sequence belongs to the methyltransferase superfamily. PrmA family.

The protein localises to the cytoplasm. The catalysed reaction is L-lysyl-[protein] + 3 S-adenosyl-L-methionine = N(6),N(6),N(6)-trimethyl-L-lysyl-[protein] + 3 S-adenosyl-L-homocysteine + 3 H(+). In terms of biological role, methylates ribosomal protein L11. The sequence is that of Ribosomal protein L11 methyltransferase from Syntrophomonas wolfei subsp. wolfei (strain DSM 2245B / Goettingen).